Consider the following 438-residue polypeptide: Putative hydrolase MSMEG_3995/MSMEI_3903 (438 aa).

Zn(2+) is bound by residues D95, D104, E143, and H208. K217 is covalently cross-linked (Isoglutamyl lysine isopeptide (Lys-Gln) (interchain with Q-Cter in protein Pup)). H400 is a binding site for Zn(2+).

The protein belongs to the peptidase M20 family. It depends on Zn(2+) as a cofactor.

The polypeptide is Putative hydrolase MSMEG_3995/MSMEI_3903 (Mycolicibacterium smegmatis (strain ATCC 700084 / mc(2)155) (Mycobacterium smegmatis)).